Here is a 143-residue protein sequence, read N- to C-terminus: Transcriptional regulator MraZ (143 aa).

SpoVT-AbrB domains are found at residues 5 to 47 and 76 to 119; these read TYTP…PREE and TDEQ…DAQA.

This sequence belongs to the MraZ family. In terms of assembly, forms oligomers.

The protein resides in the cytoplasm. The protein localises to the nucleoid. This chain is Transcriptional regulator MraZ, found in Rhodococcus opacus (strain B4).